A 213-amino-acid chain; its full sequence is Orotate phosphoribosyltransferase (213 aa).

Lys-26 is a 5-phospho-alpha-D-ribose 1-diphosphate binding site. Phe-34–Phe-35 serves as a coordination point for orotate. Residues Tyr-72–Lys-73, Arg-99, Lys-100, Lys-103, His-105, and Asp-124–Ser-132 each bind 5-phospho-alpha-D-ribose 1-diphosphate. Orotate-binding residues include Thr-128 and Arg-156.

It belongs to the purine/pyrimidine phosphoribosyltransferase family. PyrE subfamily. Homodimer. The cofactor is Mg(2+).

The enzyme catalyses orotidine 5'-phosphate + diphosphate = orotate + 5-phospho-alpha-D-ribose 1-diphosphate. It participates in pyrimidine metabolism; UMP biosynthesis via de novo pathway; UMP from orotate: step 1/2. Its function is as follows. Catalyzes the transfer of a ribosyl phosphate group from 5-phosphoribose 1-diphosphate to orotate, leading to the formation of orotidine monophosphate (OMP). The polypeptide is Orotate phosphoribosyltransferase (Methylococcus capsulatus (strain ATCC 33009 / NCIMB 11132 / Bath)).